The chain runs to 235 residues: Urease accessory protein UreF (235 aa).

This sequence belongs to the UreF family. As to quaternary structure, ureD, UreF and UreG form a complex that acts as a GTP-hydrolysis-dependent molecular chaperone, activating the urease apoprotein by helping to assemble the nickel containing metallocenter of UreC. The UreE protein probably delivers the nickel.

The protein resides in the cytoplasm. Required for maturation of urease via the functional incorporation of the urease nickel metallocenter. The protein is Urease accessory protein UreF of Haemophilus influenzae (strain PittGG).